Here is a 36-residue protein sequence, read N- to C-terminus: GSNGEPGSAGPPGPAGLRGLPGESGAVGPAGPPGSR.

A disordered region spans residues 1-36 (GSNGEPGSAGPPGPAGLRGLPGESGAVGPAGPPGSR). A 4-hydroxyproline mark is found at P6 and P12. Residues 15-29 (AGLRGLPGESGAVGP) show a composition bias toward low complexity. At P33 the chain carries 4-hydroxyproline.

The protein belongs to the fibrillar collagen family. Trimers of one alpha 2(I) and two alpha 1(I) chains. Post-translationally, proline residues at the third position of the tripeptide repeating unit (G-X-Y) are hydroxylated in some or all of the chains.

The protein localises to the secreted. The protein resides in the extracellular space. It localises to the extracellular matrix. In terms of biological role, type I collagen is a member of group I collagen (fibrillar forming collagen). This chain is Collagen alpha-2(I) chain, found in Brachylophosaurus canadensis (Campanian hadrosaur).